The chain runs to 508 residues: Photosystem II CP47 reaction center protein (508 aa).

6 consecutive transmembrane segments (helical) span residues 21-36 (SVHI…WAGS), 101-115 (IVFS…IWHW), 140-156 (GIHL…FGAF), 203-218 (IAAG…FHLS), 237-252 (VLSS…AFVV), and 457-472 (SFAL…HGAR).

This sequence belongs to the PsbB/PsbC family. PsbB subfamily. PSII is composed of 1 copy each of membrane proteins PsbA, PsbB, PsbC, PsbD, PsbE, PsbF, PsbH, PsbI, PsbJ, PsbK, PsbL, PsbM, PsbT, PsbX, PsbY, PsbZ, Psb30/Ycf12, at least 3 peripheral proteins of the oxygen-evolving complex and a large number of cofactors. It forms dimeric complexes. Requires Binds multiple chlorophylls. PSII binds additional chlorophylls, carotenoids and specific lipids. as cofactor.

It localises to the plastid. It is found in the chloroplast thylakoid membrane. One of the components of the core complex of photosystem II (PSII). It binds chlorophyll and helps catalyze the primary light-induced photochemical processes of PSII. PSII is a light-driven water:plastoquinone oxidoreductase, using light energy to abstract electrons from H(2)O, generating O(2) and a proton gradient subsequently used for ATP formation. The chain is Photosystem II CP47 reaction center protein from Morus indica (Mulberry).